Consider the following 449-residue polypeptide: Protein tweety homolog 1 (449 aa).

Residues 1–43 are Extracellular-facing; sequence MSSSHGYRASWWTYILHQVPHTNFQFEVVDNQFAPQEWPYQQA. Residues 44–64 form a helical membrane-spanning segment; that stretch reads LLFLASIAGLCLAISLILICV. Topologically, residues 65–86 are cytoplasmic; that stretch reads YLIRFCCCSSQEDDDSKSHRVC. A helical transmembrane segment spans residues 87 to 107; the sequence is CVTWSCVAAVIICCAGIGIGF. Residues 108 to 212 are Extracellular-facing; that stretch reads YGNSETNDGV…QVNFIEDYRW (105 aa). N128 carries N-linked (GlcNAc...) asparagine glycosylation. A helical transmembrane segment spans residues 213-233; sequence LAYILLLLLDLIICLFTLLGL. At 234–238 the chain is on the cytoplasmic side; the sequence is AKQIK. A helical transmembrane segment spans residues 239-259; it reads WLVIVMTVVSFFVLLLSWGSM. The Extracellular portion of the chain corresponds to 260–388; the sequence is GLEMATAVGL…LKGLCYDGME (129 aa). 2 cysteine pairs are disulfide-bonded: C273/C383 and C301/C368. Residues N282 and N353 are each glycosylated (N-linked (GlcNAc...) asparagine). The helical transmembrane segment at 389–409 threads the bilayer; it reads GILFLLLFSFLSALSFTAAIC. The Cytoplasmic portion of the chain corresponds to 410–449; that stretch reads SLPRAWKRFQNRDLDYDDMDEDDPFNPQESKRFVQWQSSI.

This sequence belongs to the tweety family. As to quaternary structure, homotetramer; disulfide-linked. Homodimer.

The protein localises to the cell membrane. The catalysed reaction is chloride(in) = chloride(out). The enzyme catalyses L-glutamate(out) = L-glutamate(in). Functionally, may act as a calcium-independent, swelling-dependent volume-regulated anion channel (VRAC-swell) which plays a pivotal role in the process of regulatory volume decrease (RVD) in the brain through the efflux of anions like chloride and organic osmolytes like glutamate. The protein is Protein tweety homolog 1 (ttyh1) of Xenopus tropicalis (Western clawed frog).